The chain runs to 309 residues: Glutaminase 2 (309 aa).

S65, N117, E162, N169, Y193, Y245, and V263 together coordinate substrate.

This sequence belongs to the glutaminase family. As to quaternary structure, homotetramer.

The enzyme catalyses L-glutamine + H2O = L-glutamate + NH4(+). The polypeptide is Glutaminase 2 (Bacillus subtilis (strain 168)).